Reading from the N-terminus, the 701-residue chain is MDDFSNLEKHESELGAFFGDLAFEEDSRSEDISLEGLQQELEECESDEVVANILSSGDKLREYAKGVENNLRKVELDSVEVAILLPDYIKESDKLVSLHDQIRDCNCILSQMETLLSGFQEEIGSISSDIKILQENSMDMGLRLKNRRVTESKLAKFVEDFIVPPKMIHVIVDGEVNEEYIKTLGILSKKLKFVETDQAVKSSKALKDVEPELEKLRQKAISKVYDFIVQKLIALRKPKTNIQILQQSVFLKYKYIISFLKEHGKEVFMDVRAAYIDTMNKVLSAHFQSYIQAFEKLQLDIATSNDLIGVDTRSTGLFSRSKEPLKNRCAVFALGERIQIIKEIDQPALIPHIAEASSLKYPYEVLFRSLHKLLMDTATSEYIFCEDFFGEQSIFYEIFAGPFSVIYEHLDSVLSSCYDAIGLLLMIRIIHHHQLIMSRRRIPCLDSYLDKVNISLWPRFKTVFDLHIGSLRNANINTIWEDDVHPHYIMRRYAEFTASFIHLNVEYGDGQLDINLERLRMAVDSLILKLAKLFPRPKQQMVFLINNYDMTIAVLKEAEPEGGKIQMHFEELLKSNTSLFAEELLVEHFSDMIKFVKSRANEDSSPNLERSITVAEVEPLVKDFGSRWKTAIELMHKDIITCFSNFLCGMDILIAGMTQLLLYYTRLEDCIKKIDGGSALNRDIVNYQSIMFEIKKYKKTF.

Coiled coils occupy residues 23 to 45 and 511 to 533; these read FEED…EECE and QLDI…LAKL.

Belongs to the VPS52 family. As to quaternary structure, component of the Golgi-associated retrograde protein (GARP) complex. Detected in pollen.

It localises to the golgi apparatus. The protein localises to the trans-Golgi network membrane. Its subcellular location is the endosome membrane. It is found in the golgi apparatus membrane. In terms of biological role, may be involved in retrograde transport of early and late endosomes to the late Golgi. This chain is Vacuolar protein sorting-associated protein 52 B (P2), found in Arabidopsis thaliana (Mouse-ear cress).